A 464-amino-acid chain; its full sequence is Protein transport protein HofB homolog (464 aa).

264 to 271 (GPTGSGKS) is an ATP binding site.

Belongs to the GSP E family.

The chain is Protein transport protein HofB homolog (hofB) from Haemophilus influenzae (strain ATCC 51907 / DSM 11121 / KW20 / Rd).